Reading from the N-terminus, the 470-residue chain is V-type proton ATPase subunit S1 (470 aa).

Residues 1-41 form the signal peptide; the sequence is MMAAMATARVRMGPRCAQALWRMPWLPVFLSLAAAAAAAAA. The propeptide occupies 42 to 231; the sequence is EQQVPLVLWS…TAVRPSRVAR (190 aa). At 42-419 the chain is on the lumenal side; the sequence is EQQVPLVLWS…EQFSYASDCA (378 aa). N-linked (GlcNAc...) asparagine glycosylation is found at N170, N261, N273, N296, N303, N350, and N357. The cysteines at positions 371 and 418 are disulfide-linked. Residues 420–440 traverse the membrane as a helical segment; sequence SFFSPGIWMGLLTSLFMLFIF. The Cytoplasmic segment spans residues 441–470; that stretch reads TYGLHMILSLKTMDRFDDHKGPTISLTQIV. S465 is modified (phosphoserine).

Belongs to the vacuolar ATPase subunit S1 family. Accessory component of the multisubunit proton-transporting vacuolar (V)-ATPase protein pump. Interacts (via N-terminus) with ATP6AP2 (via N-terminus). Interacts with RNASEK. Interacts with TMEM106B (via C-terminus). In terms of processing, N-glycosylated. Widely expressed, with highest levels in brain and lowest in liver and duodenum.

Its subcellular location is the endoplasmic reticulum membrane. It is found in the endoplasmic reticulum-Golgi intermediate compartment membrane. The protein localises to the cytoplasmic vesicle. It localises to the secretory vesicle. The protein resides in the synaptic vesicle membrane. Its subcellular location is the clathrin-coated vesicle membrane. Its function is as follows. Accessory subunit of the proton-transporting vacuolar (V)-ATPase protein pump, which is required for luminal acidification of secretory vesicles. Guides the V-type ATPase into specialized subcellular compartments, such as neuroendocrine regulated secretory vesicles or the ruffled border of the osteoclast, thereby regulating its activity. Involved in membrane trafficking and Ca(2+)-dependent membrane fusion. May play a role in the assembly of the V-type ATPase complex. In aerobic conditions, involved in intracellular iron homeostasis, thus triggering the activity of Fe(2+) prolyl hydroxylase (PHD) enzymes, and leading to HIF1A hydroxylation and subsequent proteasomal degradation. In islets of Langerhans cells, may regulate the acidification of dense-core secretory granules. This Homo sapiens (Human) protein is V-type proton ATPase subunit S1 (ATP6AP1).